Here is a 119-residue protein sequence, read N- to C-terminus: EF-hand calcium-binding domain-containing protein 2 (119 aa).

An N-terminal signal peptide occupies residues 1 to 22 (MKVAVVLIVVLVVMMIGQETDS). Residues 82–117 (VDDNGFVEFKATYDVDGDGVVQVEEYETVVELTENL) enclose the EF-hand domain. 4 residues coordinate Ca(2+): aspartate 95, aspartate 97, aspartate 99, and glutamate 106.

Component of the acid-soluble organic matrix of calcified layers of the shell (at protein level).

It localises to the secreted. This Lottia gigantea (Giant owl limpet) protein is EF-hand calcium-binding domain-containing protein 2.